An 842-amino-acid polypeptide reads, in one-letter code: ATP-binding cassette sub-family B member 6 (842 aa).

Over 1 to 26 (MVTVGNYCETEGPAGPAWTQNGLSPC) the chain is Lumenal. The segment at 1-205 (MVTVGNYCET…SGGLFILGLW (205 aa)) is required for the lysosomal targeting. The segment at 1–236 (MVTVGNYCET…GNQGRSTDRR (236 aa)) is required for ATPase activity. Cys-8 and Cys-26 are joined by a disulfide. Residues 27–47 (FFFTLVPSTLLTLGVLALVLV) form a helical membrane-spanning segment. At 48 to 72 (LPRRRREVPAGPEELSWAAGPRVAP) the chain is on the cytoplasmic side. Residues 73 to 93 (YVLQLFLATLQMALPLAGLAG) traverse the membrane as a helical segment. At 94–106 (RVGTARGVRLPGY) the chain is on the lumenal side. The helical transmembrane segment at 107–127 (LLLASVLESLASVCGLWLLVV) threads the bilayer. Residues 128-147 (ERSQARQSLAMGVWMKFRHS) lie on the Cytoplasmic side of the membrane. A helical membrane pass occupies residues 148 to 168 (LGLLLLWTVTFAAENLALVSW). Residues 169–185 (NSPQWWWARADLGQQVQ) lie on the Lumenal side of the membrane. The helical transmembrane segment at 186–206 (FGLWVLRYVTSGGLFILGLWA) threads the bilayer. The Cytoplasmic segment spans residues 207–263 (PGLRPQSYTLHVHEEDQDVGGNQGRSTDRRSTWRDLGRKLRLLSSYLWPRGSPSLQL). A helical membrane pass occupies residues 264 to 284 (IVLICLGLMGLERALNVLVPI). One can recognise an ABC transmembrane type-1 domain in the interval 265–556 (VLICLGLMGL…FGTYYRMIQT (292 aa)). The Lumenal segment spans residues 285-291 (FYRDIVN). Residues 292–312 (LLTAKAPWSSLAWTVTTYVFL) traverse the membrane as a helical segment. Topologically, residues 313-375 (KFLQGGGTGS…TGEVLRIVDR (63 aa)) are cytoplasmic. Residues 376–396 (GTSSVTGLLSYLVFSIIPTLA) traverse the membrane as a helical segment. Residue Asp-397 is a topological domain, lumenal. A helical transmembrane segment spans residues 398 to 418 (IIIGIIYFSMFFNAWFGLIVF). Residues 419 to 499 (LCMSLYLILT…STASLVVLNQ (81 aa)) are Cytoplasmic-facing. Residues 500–520 (TQNLVIGLGLLAGSLLCAYFV) traverse the membrane as a helical segment. Topologically, residues 521–529 (SEQKLQVGD) are lumenal. Residues 530-550 (FVLFGTYITQLYMPLNWFGTY) traverse the membrane as a helical segment. At 551–842 (YRMIQTNFID…PEESKPQDTA (292 aa)) the chain is on the cytoplasmic side. Residues 590-824 (IEFENVHFSY…GGVYAEMWQL (235 aa)) form the ABC transporter domain. ATP contacts are provided by residues Tyr-599 and 623 to 634 (GPSGAGKSTILR).

The protein belongs to the ABC transporter superfamily. ABCB family. Heavy Metal importer (TC 3.A.1.210) subfamily. As to quaternary structure, homodimer. In terms of processing, N-glycosylated.

Its subcellular location is the cell membrane. The protein resides in the mitochondrion outer membrane. It localises to the endoplasmic reticulum membrane. The protein localises to the golgi apparatus membrane. It is found in the endosome membrane. Its subcellular location is the lysosome membrane. The protein resides in the late endosome membrane. It localises to the early endosome membrane. The protein localises to the secreted. It is found in the extracellular exosome. Its subcellular location is the mitochondrion. The protein resides in the endosome. It localises to the multivesicular body membrane. The protein localises to the melanosome membrane. The catalysed reaction is coproporphyrin III(in) + ATP + H2O = coproporphyrin III(out) + ADP + phosphate + H(+). It carries out the reaction coproporphyrinogen III(in) + ATP + H2O = coproporphyrinogen III(out) + ADP + phosphate + H(+). It catalyses the reaction heme b(in) + ATP + H2O = heme b(out) + ADP + phosphate + H(+). The enzyme catalyses pheophorbide a(in) + ATP + H2O = pheophorbide a(out) + ADP + phosphate + H(+). The catalysed reaction is protoporphyrin IX(in) + ATP + H2O = protoporphyrin IX(out) + ADP + phosphate + H(+). It carries out the reaction coproporphyrin I(in) + ATP + H2O = coproporphyrin I(out) + ADP + phosphate + H(+). It catalyses the reaction uroporphyrin I(in) + ATP + H2O = uroporphyrin I(out) + ADP + phosphate + H(+). The enzyme catalyses uroporphyrin III(in) + ATP + H2O = uroporphyrin III(out) + ADP + phosphate + H(+). Functionally, ATP-dependent transporter that catalyzes the transport of a broad-spectrum of porphyrins from the cytoplasm to the extracellular space through the plasma membrane or into the vesicle lumen. May also function as an ATP-dependent importer of porphyrins from the cytoplasm into the mitochondria, in turn may participate in the de novo heme biosynthesis regulation and in the coordination of heme and iron homeostasis during phenylhydrazine stress. May play a key role in the early steps of melanogenesis producing PMEL amyloid fibrils. In vitro, it confers to cells a resistance to toxic metal such as arsenic and cadmium and against chemotherapeutics agent such as 5-fluorouracil, SN-38 and vincristin. In addition may play a role in the transition metal homeostasis. This chain is ATP-binding cassette sub-family B member 6, found in Mus musculus (Mouse).